The following is a 475-amino-acid chain: Adenylyl cyclase-associated protein 1 (475 aa).

The residue at position 2 (alanine 2) is an N-acetylalanine. Phosphotyrosine is present on tyrosine 31. Phosphoserine is present on serine 34. N6-acetyllysine is present on lysine 81. Disordered stretches follow at residues glutamate 216 to serine 255 and methionine 278 to glutamate 318. Residues serine 218–serine 228 are compositionally biased toward low complexity. Pro residues predominate over residues glycine 229–valine 242. Over residues serine 243 to serine 255 the composition is skewed to low complexity. Lysine 287 is modified (N6-methyllysine). Serine 290, serine 295, and serine 301 each carry phosphoserine. Positions phenylalanine 300–lysine 312 are enriched in pro residues. The residue at position 307 (threonine 307) is a Phosphothreonine. A phosphoserine mark is found at serine 308 and serine 310. Residues proline 313 to valine 453 enclose the C-CAP/cofactor C-like domain. Residue lysine 348 forms a Glycyl lysine isopeptide (Lys-Gly) (interchain with G-Cter in SUMO1) linkage.

It belongs to the CAP family. In terms of assembly, homodimer. Binds actin monomers.

It is found in the cell membrane. In terms of biological role, directly regulates filament dynamics and has been implicated in a number of complex developmental and morphological processes, including mRNA localization and the establishment of cell polarity. The sequence is that of Adenylyl cyclase-associated protein 1 (CAP1) from Macaca fascicularis (Crab-eating macaque).